The primary structure comprises 442 residues: UPF0597 protein HRM2_02820 (442 aa).

It belongs to the UPF0597 family.

The protein is UPF0597 protein HRM2_02820 of Desulforapulum autotrophicum (strain ATCC 43914 / DSM 3382 / VKM B-1955 / HRM2) (Desulfobacterium autotrophicum).